The primary structure comprises 311 residues: 4-hydroxyproline 2-epimerase (311 aa).

C88 serves as the catalytic Proton acceptor. Substrate contacts are provided by residues 89-90, H208, and D232; that span reads GH. C236 acts as the Proton donor in catalysis. 237–238 is a substrate binding site; that stretch reads GT.

It belongs to the proline racemase family.

It carries out the reaction trans-4-hydroxy-L-proline = cis-4-hydroxy-D-proline. Its function is as follows. Catalyzes the epimerization of trans-4-hydroxy-L-proline (t4LHyp) to cis-4-hydroxy-D-proline (c4DHyp). Is likely involved in a degradation pathway that converts t4LHyp to alpha-ketoglutarate. Displays no proline racemase activity. The sequence is that of 4-hydroxyproline 2-epimerase from Chromohalobacter salexigens (strain ATCC BAA-138 / DSM 3043 / CIP 106854 / NCIMB 13768 / 1H11).